The following is a 681-amino-acid chain: DNA ligase (681 aa).

Residues 33–37 (DGQFD), 83–84 (SL), and glutamate 113 contribute to the NAD(+) site. Lysine 115 acts as the N6-AMP-lysine intermediate in catalysis. NAD(+)-binding residues include arginine 136, glutamate 176, lysine 292, and lysine 316. Zn(2+)-binding residues include cysteine 410, cysteine 413, cysteine 429, and cysteine 435. The BRCT domain maps to 599–681 (SIPRNLEGLS…RALLADGPPA (83 aa)).

This sequence belongs to the NAD-dependent DNA ligase family. LigA subfamily. Mg(2+) is required as a cofactor. Mn(2+) serves as cofactor.

It carries out the reaction NAD(+) + (deoxyribonucleotide)n-3'-hydroxyl + 5'-phospho-(deoxyribonucleotide)m = (deoxyribonucleotide)n+m + AMP + beta-nicotinamide D-nucleotide.. Its function is as follows. DNA ligase that catalyzes the formation of phosphodiester linkages between 5'-phosphoryl and 3'-hydroxyl groups in double-stranded DNA using NAD as a coenzyme and as the energy source for the reaction. It is essential for DNA replication and repair of damaged DNA. In Mycobacteroides abscessus (strain ATCC 19977 / DSM 44196 / CCUG 20993 / CIP 104536 / JCM 13569 / NCTC 13031 / TMC 1543 / L948) (Mycobacterium abscessus), this protein is DNA ligase.